We begin with the raw amino-acid sequence, 256 residues long: MKHIARKRFGQHFLSDAAVVDAIVGLIDPRPGQALVEIGPGLGAMTDPLVARCEHLTVVELDRDLAARLRRRAELQVIESDVLRVDFAALAMASAGRLRIVGNLPYNISTPILFHLLPAAAQVEDQHFMLQKEVVERMAAAPCSKDYGRLSVMLQWRYDIESVLDVPPEAFEPPPRVNSAVVRMLPFPAPPAVDAALLGELVATAFSQRRKLLRHTLGKWLDAREFSGTFDTQRRAEEVPVADYLALALALTPGER.

6 residues coordinate S-adenosyl-L-methionine: His-12, Leu-14, Gly-39, Glu-60, Asp-81, and Asn-103.

This sequence belongs to the class I-like SAM-binding methyltransferase superfamily. rRNA adenine N(6)-methyltransferase family. RsmA subfamily.

It is found in the cytoplasm. It carries out the reaction adenosine(1518)/adenosine(1519) in 16S rRNA + 4 S-adenosyl-L-methionine = N(6)-dimethyladenosine(1518)/N(6)-dimethyladenosine(1519) in 16S rRNA + 4 S-adenosyl-L-homocysteine + 4 H(+). In terms of biological role, specifically dimethylates two adjacent adenosines (A1518 and A1519) in the loop of a conserved hairpin near the 3'-end of 16S rRNA in the 30S particle. May play a critical role in biogenesis of 30S subunits. The sequence is that of Ribosomal RNA small subunit methyltransferase A from Methylibium petroleiphilum (strain ATCC BAA-1232 / LMG 22953 / PM1).